The following is a 232-amino-acid chain: 5'-methylthioadenosine/S-adenosylhomocysteine nucleosidase (232 aa).

The active-site Proton acceptor is the Glu-14. Residues Gly-80, Val-154, and 175–176 (ME) contribute to the substrate site. Catalysis depends on Asp-199, which acts as the Proton donor.

This sequence belongs to the PNP/UDP phosphorylase family. MtnN subfamily.

The catalysed reaction is S-adenosyl-L-homocysteine + H2O = S-(5-deoxy-D-ribos-5-yl)-L-homocysteine + adenine. It carries out the reaction S-methyl-5'-thioadenosine + H2O = 5-(methylsulfanyl)-D-ribose + adenine. It catalyses the reaction 5'-deoxyadenosine + H2O = 5-deoxy-D-ribose + adenine. It participates in amino-acid biosynthesis; L-methionine biosynthesis via salvage pathway; S-methyl-5-thio-alpha-D-ribose 1-phosphate from S-methyl-5'-thioadenosine (hydrolase route): step 1/2. Catalyzes the irreversible cleavage of the glycosidic bond in both 5'-methylthioadenosine (MTA) and S-adenosylhomocysteine (SAH/AdoHcy) to adenine and the corresponding thioribose, 5'-methylthioribose and S-ribosylhomocysteine, respectively. Also cleaves 5'-deoxyadenosine, a toxic by-product of radical S-adenosylmethionine (SAM) enzymes, into 5-deoxyribose and adenine. This Actinobacillus pleuropneumoniae serotype 3 (strain JL03) protein is 5'-methylthioadenosine/S-adenosylhomocysteine nucleosidase.